The primary structure comprises 338 residues: 5-dehydro-2-deoxygluconokinase (338 aa).

Belongs to the carbohydrate kinase PfkB family.

It carries out the reaction 5-dehydro-2-deoxy-D-gluconate + ATP = 6-phospho-5-dehydro-2-deoxy-D-gluconate + ADP + H(+). It participates in polyol metabolism; myo-inositol degradation into acetyl-CoA; acetyl-CoA from myo-inositol: step 5/7. Functionally, catalyzes the phosphorylation of 5-dehydro-2-deoxy-D-gluconate (2-deoxy-5-keto-D-gluconate or DKG) to 6-phospho-5-dehydro-2-deoxy-D-gluconate (DKGP). The polypeptide is 5-dehydro-2-deoxygluconokinase (Mesomycoplasma hyopneumoniae (strain J / ATCC 25934 / NCTC 10110) (Mycoplasma hyopneumoniae)).